The sequence spans 323 residues: Beta-ketoacyl-[acyl-carrier-protein] synthase III (323 aa).

Catalysis depends on residues cysteine 113 and histidine 250. The ACP-binding stretch occupies residues 251–255 (QANKR). The active site involves asparagine 280.

The protein belongs to the thiolase-like superfamily. FabH family. As to quaternary structure, homodimer.

The protein resides in the cytoplasm. It catalyses the reaction malonyl-[ACP] + acetyl-CoA + H(+) = 3-oxobutanoyl-[ACP] + CO2 + CoA. It functions in the pathway lipid metabolism; fatty acid biosynthesis. Its function is as follows. Catalyzes the condensation reaction of fatty acid synthesis by the addition to an acyl acceptor of two carbons from malonyl-ACP. Catalyzes the first condensation reaction which initiates fatty acid synthesis and may therefore play a role in governing the total rate of fatty acid production. Possesses both acetoacetyl-ACP synthase and acetyl transacylase activities. Its substrate specificity determines the biosynthesis of branched-chain and/or straight-chain of fatty acids. This Brucella abortus biovar 1 (strain 9-941) protein is Beta-ketoacyl-[acyl-carrier-protein] synthase III.